The chain runs to 608 residues: Serine/threonine-protein kinase BUR1 (608 aa).

The Protein kinase domain maps to 39–346; sequence YEIIQKLGQG…ALDALNHNYF (308 aa). ATP contacts are provided by residues 45 to 53 and Lys68; that span reads LGQGTFGVV. Asp174 serves as the catalytic Proton acceptor. Disordered stretches follow at residues 383 to 419 and 443 to 571; these read HEAN…LALP and YIPK…FDED. Low complexity predominate over residues 400–411; that stretch reads YNNSNNYPRNRN. Basic and acidic residues predominate over residues 471–482; the sequence is LRDRSPRREGHI. Residues 487-502 show a composition bias toward low complexity; the sequence is STTNSNNISSNSSASN. Polar residues-rich tracts occupy residues 503 to 512 and 539 to 548; these read VGGTLSNPTH and PQSSSRNVSD. Residues 559–571 show a composition bias toward acidic residues; that stretch reads EQNESDLTDFDED.

It belongs to the protein kinase superfamily. CMGC Ser/Thr protein kinase family. CDC2/CDKX subfamily.

Its subcellular location is the nucleus. The catalysed reaction is L-seryl-[protein] + ATP = O-phospho-L-seryl-[protein] + ADP + H(+). It catalyses the reaction L-threonyl-[protein] + ATP = O-phospho-L-threonyl-[protein] + ADP + H(+). It carries out the reaction [DNA-directed RNA polymerase] + ATP = phospho-[DNA-directed RNA polymerase] + ADP + H(+). Serine/threonine-protein kinase involved in transcription regulation. Phosphorylates the UBC2/RAD6 ubiquitin-conjugating enzyme (E2), leading to monoubiquitination of histone H2B and the silencing of telomeric-associated genes. Also required for histone H3 methylation. Necessary for the recovery from pheromone-induced growth arrest in the cell cycle G1 phase. The polypeptide is Serine/threonine-protein kinase BUR1 (BUR1) (Debaryomyces hansenii (strain ATCC 36239 / CBS 767 / BCRC 21394 / JCM 1990 / NBRC 0083 / IGC 2968) (Yeast)).